The primary structure comprises 122 residues: Large ribosomal subunit protein uL14c (122 aa).

It belongs to the universal ribosomal protein uL14 family. In terms of assembly, part of the 50S ribosomal subunit.

It localises to the plastid. It is found in the chloroplast. Functionally, binds to 23S rRNA. The polypeptide is Large ribosomal subunit protein uL14c (Oltmannsiellopsis viridis (Marine flagellate)).